A 155-amino-acid polypeptide reads, in one-letter code: Small ribosomal subunit protein uS7 (155 aa).

Belongs to the universal ribosomal protein uS7 family. As to quaternary structure, part of the 30S ribosomal subunit. Contacts proteins S9 and S11.

Functionally, one of the primary rRNA binding proteins, it binds directly to 16S rRNA where it nucleates assembly of the head domain of the 30S subunit. Is located at the subunit interface close to the decoding center, probably blocks exit of the E-site tRNA. The sequence is that of Small ribosomal subunit protein uS7 from Chloroherpeton thalassium (strain ATCC 35110 / GB-78).